The following is a 172-amino-acid chain: Translocon-associated protein subunit delta (172 aa).

The N-terminal stretch at 1-24 is a signal peptide; it reads MAALASLGALALLLLSGLSCCSEA. Cysteines 25 and 56 form a disulfide. Topologically, residues 25–143 are lumenal; sequence CVEPQITPSY…SVDHRGTWNG (119 aa). Lysine 72 participates in a covalent cross-link: Glycyl lysine isopeptide (Lys-Gly) (interchain with G-Cter in ubiquitin). Residues 144-164 form a helical membrane-spanning segment; that stretch reads PWVSTEVLAAAIGLVIYYLAF. Residues 165–172 are Cytoplasmic-facing; the sequence is SAKSHIQA.

Belongs to the TRAP-delta family. Heterotetramer of TRAP-alpha, TRAP-beta, TRAP-delta and TRAP-gamma.

It localises to the endoplasmic reticulum membrane. In terms of biological role, TRAP proteins are part of a complex whose function is to bind calcium to the ER membrane and thereby regulate the retention of ER resident proteins. This is Translocon-associated protein subunit delta (SSR4) from Bos taurus (Bovine).